The chain runs to 98 residues: uncharacterized protein (98 aa).

Over residues Arg-19–Lys-31 the composition is skewed to basic residues. Residues Arg-19–Ser-47 are disordered.

Belongs to the lymphocryptovirus BNLF2b family.

This is an uncharacterized protein from Homo sapiens (Human).